A 35-amino-acid polypeptide reads, in one-letter code: Photosystem II reaction center protein M (35 aa).

Residues 7–27 (GLLATILVILVPSIFLVILYV) traverse the membrane as a helical segment.

This sequence belongs to the PsbM family. In terms of assembly, PSII is composed of 1 copy each of membrane proteins PsbA, PsbB, PsbC, PsbD, PsbE, PsbF, PsbH, PsbI, PsbJ, PsbK, PsbL, PsbM, PsbT, PsbX, PsbY, PsbZ, Psb30/Ycf12, peripheral proteins PsbO, CyanoQ (PsbQ), PsbU, PsbV and a large number of cofactors. It forms dimeric complexes.

Its subcellular location is the cellular thylakoid membrane. Functionally, one of the components of the core complex of photosystem II (PSII). PSII is a light-driven water:plastoquinone oxidoreductase that uses light energy to abstract electrons from H(2)O, generating O(2) and a proton gradient subsequently used for ATP formation. It consists of a core antenna complex that captures photons, and an electron transfer chain that converts photonic excitation into a charge separation. This subunit is found at the monomer-monomer interface. The protein is Photosystem II reaction center protein M of Synechococcus sp. (strain JA-3-3Ab) (Cyanobacteria bacterium Yellowstone A-Prime).